The sequence spans 359 residues: Ni-sirohydrochlorin a,c-diamide reductive cyclase complex, component CfbD (359 aa).

Belongs to the NifD/NifK/NifE/NifN family. As to quaternary structure, homodimer or monomer. The Ni-sirohydrochlorin a,c-diamide reductive cyclase complex is composed of a NifH homolog component CfbC and a NifD homolog component CfbD. The cofactor is [4Fe-4S] cluster.

It catalyses the reaction Ni-sirohydrochlorin a,c-diamide + 3 AH2 + ATP + H2O = 15,17(3)-seco-F430-17(3)-acid + 3 A + ADP + phosphate. In terms of biological role, involved in the biosynthesis of the unique nickel-containing tetrapyrrole coenzyme F430, the prosthetic group of methyl-coenzyme M reductase (MCR), which plays a key role in methanogenesis and anaerobic methane oxidation. Catalyzes both the six-electron reduction of the tetrahydroporphyrin ring system and the gamma-lactamization of the c-acetamide side chain of Ni-sirohydrochlorin a,c-diamide to yield 15,17(3)-seco-F430-17(3)-acid (seco-F430), the last intermediate in the biosynthesis of the coenzyme F430. The polypeptide is Ni-sirohydrochlorin a,c-diamide reductive cyclase complex, component CfbD (Methanothermobacter thermautotrophicus (strain ATCC 29096 / DSM 1053 / JCM 10044 / NBRC 100330 / Delta H) (Methanobacterium thermoautotrophicum)).